Reading from the N-terminus, the 520-residue chain is Protein root UVB sensitive 4 (520 aa).

Transmembrane regions (helical) follow at residues 275–295 and 301–321; these read IQTV…NMLF and LQAC…LLGI.

It belongs to the RUS1 family.

It localises to the membrane. This Arabidopsis thaliana (Mouse-ear cress) protein is Protein root UVB sensitive 4.